A 442-amino-acid polypeptide reads, in one-letter code: Cytochrome c biogenesis protein CcsB (442 aa).

Transmembrane regions (helical) follow at residues 17 to 37, 76 to 96, and 162 to 182; these read LRLA…GTVI, TPWY…CTLT, and LGPI…ILGA.

It belongs to the Ccs1/CcsB family. May interact with CcsA.

The protein resides in the cellular thylakoid membrane. In terms of biological role, required during biogenesis of c-type cytochromes (cytochrome c6 and cytochrome f) at the step of heme attachment. In Thermosynechococcus vestitus (strain NIES-2133 / IAM M-273 / BP-1), this protein is Cytochrome c biogenesis protein CcsB.